Reading from the N-terminus, the 303-residue chain is Oxygen-dependent coproporphyrinogen-III oxidase (303 aa).

Position 93 (serine 93) interacts with substrate. 2 residues coordinate a divalent metal cation: histidine 97 and histidine 107. Residue histidine 107 is the Proton donor of the active site. Residue 109–111 (NVR) participates in substrate binding. A divalent metal cation is bound by residues histidine 146 and histidine 176. The interval 241–276 (YVEFNLVYDRGTLFGLQSGGRTESILMSLPPQVRWG) is important for dimerization. 259–261 (GGR) contributes to the substrate binding site.

The protein belongs to the aerobic coproporphyrinogen-III oxidase family. In terms of assembly, homodimer. A divalent metal cation serves as cofactor.

It localises to the cytoplasm. It catalyses the reaction coproporphyrinogen III + O2 + 2 H(+) = protoporphyrinogen IX + 2 CO2 + 2 H2O. The protein operates within porphyrin-containing compound metabolism; protoporphyrin-IX biosynthesis; protoporphyrinogen-IX from coproporphyrinogen-III (O2 route): step 1/1. Its function is as follows. Involved in the heme biosynthesis. Catalyzes the aerobic oxidative decarboxylation of propionate groups of rings A and B of coproporphyrinogen-III to yield the vinyl groups in protoporphyrinogen-IX. The sequence is that of Oxygen-dependent coproporphyrinogen-III oxidase from Pseudomonas putida (strain ATCC 47054 / DSM 6125 / CFBP 8728 / NCIMB 11950 / KT2440).